The chain runs to 71 residues: UPF0346 protein BCQ_2236 (71 aa).

Belongs to the UPF0346 family.

This Bacillus cereus (strain Q1) protein is UPF0346 protein BCQ_2236.